A 410-amino-acid polypeptide reads, in one-letter code: E3 SUMO-protein ligase EGR2 (410 aa).

Residues 68-83 (PPASTTASSSVTSASP) show a composition bias toward low complexity. Disordered regions lie at residues 68 to 95 (PPAS…GVCT), 101 to 120 (PELD…SGCT), and 127 to 151 (PSAF…SYPS). Residues 104-107 (DHLY) carry the HCFC1-binding-motif (HBM) motif. Residues 127 to 143 (PSAFLSPPTTSTSSLAY) are compositionally biased toward low complexity. Lys188 bears the N6-acetyllysine mark. Residues 217–286 (PSAGVTGPGA…PYPCPAEGCD (70 aa)) form a disordered region. The segment covering 222-231 (TGPGASGGSE) has biased composition (gly residues). Over residues 237 to 248 (GSGSAAVTTSPY) the composition is skewed to polar residues. 3 C2H2-type zinc fingers span residues 278–302 (YPCP…IRIH), 308–330 (FQCR…IRTH), and 336–358 (FACD…TKIH). Residues 349 to 410 (DERKRHTKIH…LACTSRTRTP (62 aa)) are disordered. Residues 353–363 (RHTKIHLRQKE) show a composition bias toward basic residues. A compositionally biased stretch (low complexity) spans 367 to 380 (SAPSSSASAQPSAS).

Belongs to the EGR C2H2-type zinc-finger protein family. Interacts with HCFC1. Interacts with WWP2. Interacts with UBC9. Interacts with CITED1. Interacts (via phosphorylated form) with SFN. Post-translationally, ubiquitinated by WWP2 leading to proteasomal degradation. In terms of processing, acetylated. May be deacetylated by HDAC6, HDAC10 or SIRT1.

The protein localises to the nucleus. It participates in protein modification; protein sumoylation. Its function is as follows. Sequence-specific DNA-binding transcription factor. Plays a role in hindbrain segmentation by regulating the expression of a subset of homeobox containing genes and in Schwann cell myelination by regulating the expression of genes involved in the formation and maintenance of myelin. Binds to two EGR2-consensus sites EGR2A (5'-CTGTAGGAG-3') and EGR2B (5'-ATGTAGGTG-3') in the HOXB3 enhancer and promotes HOXB3 transcriptional activation. Binds to specific DNA sites located in the promoter region of HOXA4, HOXB2 and ERBB2. Regulates hindbrain segmentation by controlling the expression of Hox genes, such as HOXA4, HOXB3 and HOXB2, and thereby specifying odd and even rhombomeres. Promotes the expression of HOXB3 in the rhombomere r5 in the hindbrain. Regulates myelination in the peripheral nervous system after birth, possibly by regulating the expression of myelin proteins, such as MPZ, and by promoting the differentiation of Schwann cells. Involved in the development of the jaw openener musculature, probably by playing a role in its innervation through trigeminal motor neurons. May play a role in adipogenesis, possibly by regulating the expression of CEBPB. In terms of biological role, E3 SUMO-protein ligase helping SUMO1 conjugation to its coregulators NAB1 and NAB2, whose sumoylation down-regulates EGR2 transcriptional activity. The chain is E3 SUMO-protein ligase EGR2 (EGR2) from Cricetulus griseus (Chinese hamster).